We begin with the raw amino-acid sequence, 229 residues long: Ribonuclease 3 (229 aa).

Residues L5–D127 enclose the RNase III domain. Mg(2+) is bound at residue E40. The active site involves D44. Residues D113 and E116 each contribute to the Mg(2+) site. E116 is an active-site residue. In terms of domain architecture, DRBM spans D154 to V224.

Belongs to the ribonuclease III family. As to quaternary structure, homodimer. Mg(2+) is required as a cofactor.

It is found in the cytoplasm. The enzyme catalyses Endonucleolytic cleavage to 5'-phosphomonoester.. In terms of biological role, digests double-stranded RNA. Involved in the processing of primary rRNA transcript to yield the immediate precursors to the large and small rRNAs (23S and 16S). Processes some mRNAs, and tRNAs when they are encoded in the rRNA operon. Processes pre-crRNA and tracrRNA of type II CRISPR loci if present in the organism. This Pseudomonas putida (strain W619) protein is Ribonuclease 3.